The sequence spans 409 residues: ORC1-type DNA replication protein 1 (409 aa).

ATP contacts are provided by residues 63–67 (TGKTA), Tyr206, and Arg218.

The protein belongs to the CDC6/cdc18 family.

In terms of biological role, involved in regulation of DNA replication. The polypeptide is ORC1-type DNA replication protein 1 (cdc6-1) (Archaeoglobus fulgidus (strain ATCC 49558 / DSM 4304 / JCM 9628 / NBRC 100126 / VC-16)).